The following is a 347-amino-acid chain: S-adenosylmethionine:tRNA ribosyltransferase-isomerase (347 aa).

Belongs to the QueA family. In terms of assembly, monomer.

Its subcellular location is the cytoplasm. It catalyses the reaction 7-aminomethyl-7-carbaguanosine(34) in tRNA + S-adenosyl-L-methionine = epoxyqueuosine(34) in tRNA + adenine + L-methionine + 2 H(+). Its pathway is tRNA modification; tRNA-queuosine biosynthesis. Transfers and isomerizes the ribose moiety from AdoMet to the 7-aminomethyl group of 7-deazaguanine (preQ1-tRNA) to give epoxyqueuosine (oQ-tRNA). This is S-adenosylmethionine:tRNA ribosyltransferase-isomerase from Methylococcus capsulatus (strain ATCC 33009 / NCIMB 11132 / Bath).